The sequence spans 139 residues: Protein spalt-accessory (139 aa).

Residues 1 to 16 (MKLLIALLALVTAAIA) form the signal peptide. The segment covering 60–75 (GIGQGGVHPGQGGFAG) has biased composition (gly residues). Positions 60-139 (GIGQGGVHPG…HHEHHGHHRH (80 aa)) are disordered. Basic and acidic residues predominate over residues 109–121 (NPHEYPEHHGEHH). Residues 122–139 (REHHEHHGHHEHHGHHRH) show a composition bias toward basic residues.

The protein resides in the secreted. Functionally, likely to be involved in the establishment of the head. This chain is Protein spalt-accessory (sala), found in Drosophila simulans (Fruit fly).